The sequence spans 940 residues: Isoleucine--tRNA ligase (940 aa).

Residues 59–69 (PYANGDIHIGH) carry the 'HIGH' region motif. Position 563 (Glu563) interacts with L-isoleucyl-5'-AMP. A 'KMSKS' region motif is present at residues 604–608 (KMSKS). Lys607 contacts ATP. Zn(2+) is bound by residues Cys903, Cys906, Cys923, and Cys926.

Belongs to the class-I aminoacyl-tRNA synthetase family. IleS type 1 subfamily. Monomer. Requires Zn(2+) as cofactor.

It localises to the cytoplasm. The enzyme catalyses tRNA(Ile) + L-isoleucine + ATP = L-isoleucyl-tRNA(Ile) + AMP + diphosphate. Catalyzes the attachment of isoleucine to tRNA(Ile). As IleRS can inadvertently accommodate and process structurally similar amino acids such as valine, to avoid such errors it has two additional distinct tRNA(Ile)-dependent editing activities. One activity is designated as 'pretransfer' editing and involves the hydrolysis of activated Val-AMP. The other activity is designated 'posttransfer' editing and involves deacylation of mischarged Val-tRNA(Ile). The protein is Isoleucine--tRNA ligase of Wigglesworthia glossinidia brevipalpis.